The primary structure comprises 426 residues: Glutamate-1-semialdehyde 2,1-aminomutase (426 aa).

An N6-(pyridoxal phosphate)lysine modification is found at Lys265.

It belongs to the class-III pyridoxal-phosphate-dependent aminotransferase family. HemL subfamily. As to quaternary structure, homodimer. Pyridoxal 5'-phosphate serves as cofactor.

The protein resides in the cytoplasm. The catalysed reaction is (S)-4-amino-5-oxopentanoate = 5-aminolevulinate. It participates in porphyrin-containing compound metabolism; protoporphyrin-IX biosynthesis; 5-aminolevulinate from L-glutamyl-tRNA(Glu): step 2/2. This Escherichia coli (strain SMS-3-5 / SECEC) protein is Glutamate-1-semialdehyde 2,1-aminomutase.